The following is a 186-amino-acid chain: Lipid A palmitoyltransferase PagP (186 aa).

A signal peptide spans 1–25 (MNVSKYVAIFSFVFIQLISVGKVFA). Catalysis depends on residues His-58, Asp-101, and Ser-102.

It belongs to the lipid A palmitoyltransferase family. As to quaternary structure, homodimer.

It is found in the cell outer membrane. The enzyme catalyses lipid A (E. coli) + a 1-hexadecanoyl-2-acyl-sn-glycero-3-phosphocholine = hepta-acyl lipid A (E. coli) + a 2-acyl-sn-glycero-3-phosphocholine. It carries out the reaction lipid IIA + a 1-hexadecanoyl-2-acyl-sn-glycero-3-phosphocholine = lipid IIB + a 2-acyl-sn-glycero-3-phosphocholine. The catalysed reaction is lipid IVA (E. coli) + a 1-hexadecanoyl-2-acyl-sn-glycero-3-phosphocholine = lipid IVB (E. coli) + a 2-acyl-sn-glycero-3-phosphocholine. Functionally, transfers a palmitate residue from the sn-1 position of a phospholipid to the N-linked hydroxymyristate on the proximal unit of lipid A or its precursors. This chain is Lipid A palmitoyltransferase PagP, found in Escherichia coli (strain ATCC 55124 / KO11FL).